A 189-amino-acid chain; its full sequence is Glucose-6-phosphate isomerase (189 aa).

Fe cation contacts are provided by His88, His90, Glu97, and His136.

It belongs to the archaeal-type GPI family. In terms of assembly, homodimer. The cofactor is Fe cation.

Its subcellular location is the cytoplasm. It carries out the reaction alpha-D-glucose 6-phosphate = beta-D-fructose 6-phosphate. It functions in the pathway carbohydrate degradation; glycolysis; D-glyceraldehyde 3-phosphate and glycerone phosphate from D-glucose: step 2/4. This chain is Glucose-6-phosphate isomerase (pgiA), found in Pyrococcus abyssi (strain GE5 / Orsay).